Reading from the N-terminus, the 280-residue chain is 3-methyl-2-oxobutanoate hydroxymethyltransferase (280 aa).

Mg(2+) is bound by residues Asp-45 and Asp-84. 3-methyl-2-oxobutanoate is bound by residues 45-46 (DS), Asp-84, and Lys-114. Glu-116 serves as a coordination point for Mg(2+). Glu-183 functions as the Proton acceptor in the catalytic mechanism.

The protein belongs to the PanB family. In terms of assembly, homodecamer; pentamer of dimers. Mg(2+) is required as a cofactor.

The protein localises to the cytoplasm. The enzyme catalyses 3-methyl-2-oxobutanoate + (6R)-5,10-methylene-5,6,7,8-tetrahydrofolate + H2O = 2-dehydropantoate + (6S)-5,6,7,8-tetrahydrofolate. The protein operates within cofactor biosynthesis; (R)-pantothenate biosynthesis; (R)-pantoate from 3-methyl-2-oxobutanoate: step 1/2. Functionally, catalyzes the reversible reaction in which hydroxymethyl group from 5,10-methylenetetrahydrofolate is transferred onto alpha-ketoisovalerate to form ketopantoate. The polypeptide is 3-methyl-2-oxobutanoate hydroxymethyltransferase (Clostridium kluyveri (strain ATCC 8527 / DSM 555 / NBRC 12016 / NCIMB 10680 / K1)).